The chain runs to 466 residues: Cocosin 1 (466 aa).

Residues 1–22 form the signal peptide; it reads MGSSSLLSFSLCLLLLCHLSQA. 2 disulfides stabilise this stretch: C45–C78 and C121–C288. Cupin type-1 domains follow at residues 50–242 and 294–443; these read LNAL…ELAR and QNIG…DEAR.

This sequence belongs to the 11S seed storage protein (globulins) family. In terms of assembly, hexamer; each subunit is composed of an acidic and a basic chain derived from a single precursor and linked by a disulfide bond. Endosperm of the seeds.

Seed storage protein. This chain is Cocosin 1, found in Cocos nucifera (Coconut palm).